The primary structure comprises 207 residues: Superoxide dismutase [Fe] (207 aa).

Fe cation-binding residues include His28, His76, Asp160, and His164.

Belongs to the iron/manganese superoxide dismutase family. As to quaternary structure, homotetramer. Fe cation serves as cofactor.

It is found in the secreted. The catalysed reaction is 2 superoxide + 2 H(+) = H2O2 + O2. Functionally, destroys superoxide anion radicals which are normally produced within the cells and which are toxic to biological systems. This chain is Superoxide dismutase [Fe] (sodB), found in Mycobacterium tuberculosis (strain CDC 1551 / Oshkosh).